A 239-amino-acid chain; its full sequence is Small ribosomal subunit protein uS2 (239 aa).

Belongs to the universal ribosomal protein uS2 family.

The polypeptide is Small ribosomal subunit protein uS2 (Synechococcus sp. (strain CC9902)).